The following is a 651-amino-acid chain: Translation initiation factor eIF2B subunit delta (651 aa).

A disordered region spans residues 1-108 (MSESEAKSRS…NERNVKKSTL (108 aa)). Ser-2 is subject to N-acetylserine. The segment covering 11–28 (ATPPSKAKQATPTTTAAA) has biased composition (low complexity). Basic and acidic residues-rich tracts occupy residues 30–49 (GEKK…EKAA) and 76–90 (KQLQ…EQKQ). The residue at position 106 (Ser-106) is a Phosphoserine. Phosphothreonine is present on Thr-121. The disordered stretch occupies residues 566-600 (AMENKPKGNKIGGKKGSEGESKDASNEEDSNSKNI). Residues 580-590 (KGSEGESKDAS) are compositionally biased toward basic and acidic residues.

This sequence belongs to the eIF-2B alpha/beta/delta subunits family. As to quaternary structure, component of the translation initiation factor 2B (eIF2B) complex which is a heterodecamer of two sets of five different subunits: alpha, beta, gamma, delta and epsilon. Subunits alpha, beta and delta comprise a regulatory subcomplex and subunits epsilon and gamma comprise a catalytic subcomplex. Within the complex, the hexameric regulatory complex resides at the center, with the two heterodimeric catalytic subcomplexes bound on opposite sides.

Its subcellular location is the cytoplasm. The protein localises to the cytosol. Acts as a component of the translation initiation factor 2B (eIF2B) complex, which catalyzes the exchange of GDP for GTP on the eukaryotic initiation factor 2 (eIF2) complex gamma subunit. Its guanine nucleotide exchange factor activity is repressed when bound to eIF2 complex phosphorylated on the alpha subunit, thereby limiting the amount of methionyl-initiator methionine tRNA available to the ribosome and consequently global translation is repressed. It activates the synthesis of GCN4 in yeast under amino acid starvation conditions by suppressing the inhibitory effects of multiple AUG codons present in the leader of GCN4 mRNA. It may promote either repression or activation of GCN4 expression depending on amino acid availability. GCD2 is also required for cell viability. Its function can partially be replaced by GCN3 under normal growth conditions in GCD2-defective mutants, under AA starvation conditions GCN3 is an antagonist (GCN4 translational activator). In Saccharomyces cerevisiae (strain ATCC 204508 / S288c) (Baker's yeast), this protein is Translation initiation factor eIF2B subunit delta (GCD2).